The following is a 340-amino-acid chain: Aldose 1-epimerase (340 aa).

Arginine 77 contacts substrate. The Proton donor role is filled by histidine 172. Aspartate 243 is a binding site for substrate. Glutamate 305 (proton acceptor) is an active-site residue.

It belongs to the aldose epimerase family.

It localises to the cytoplasm. The enzyme catalyses alpha-D-glucose = beta-D-glucose. It functions in the pathway carbohydrate metabolism; hexose metabolism. Mutarotase converts alpha-aldose to the beta-anomer. It is active on D-glucose, L-arabinose, D-xylose, D-galactose, maltose and lactose. The chain is Aldose 1-epimerase (galM) from Haemophilus influenzae (strain ATCC 51907 / DSM 11121 / KW20 / Rd).